Consider the following 1659-residue polypeptide: Daxx-like protein (1659 aa).

Disordered stretches follow at residues 1–25 (MSAS…RRRL) and 265–336 (QLQQ…VRSL). Residues 438–469 (LGQLQQEQQKILGQLQQQKQQQQQQQKKILGQ) are a coiled coil. 3 stretches are compositionally biased toward low complexity: residues 506-520 (SVGQ…QSQQ), 528-542 (KQQP…VGQF), and 600-625 (GQLQ…QQQQ). 7 disordered regions span residues 506-542 (SVGQ…VGQF), 600-645 (GQLQ…TLAG), 658-713 (SAGQ…MPQK), 872-894 (TLPF…HVQG), 924-952 (LPPT…VQQQ), 1023-1060 (VESP…QSRA), and 1536-1555 (FKIA…EDDD). Over residues 626–635 (KISAGQLQEH) the composition is skewed to polar residues. 2 stretches are compositionally biased toward low complexity: residues 636–645 (SQQQQKTLAG) and 658–698 (SAGQ…QPQQ). Polar residues-rich tracts occupy residues 699 to 711 (RTSA…QQMP) and 885 to 894 (APMTSTHVQG). The tract at residues 870–1659 (ARTLPFRSSQ…DQIIISDEES (790 aa)) is necessary for interaction with His3.3A and His3.3B. Residues 924-937 (LPPTTSITPQLTPT) are compositionally biased toward low complexity. Positions 1541–1555 (DGDDSEEESDSEDDD) are enriched in acidic residues.

As to quaternary structure, interacts with p53 (via C-terminus). Interacts (via C-terminus) with His3.3A and His3.3B. Interacts with asf1. Ubiquitously expressed with higher levels in the head (at protein level). Expressed in the germ line, with prominent expression in primary spermatocytes and meiotic spermatocytes (at protein level). In ovaries, expressed in nurse cells and in the germinal vesicle of the ovarian follicle at stage 10 (at protein level).

The protein localises to the cytoplasm. It is found in the cytosol. It localises to the nucleus. Its subcellular location is the chromosome. Its function is as follows. Transcription regulator. Acts as a histone chaperone that facilitates deposition of histone H3.3. Has a role in chromatin remodeling together with asf1 and XNP. Has role in the transcriptional apoptotic response to oxidative and UV stress. The polypeptide is Daxx-like protein (Drosophila melanogaster (Fruit fly)).